We begin with the raw amino-acid sequence, 64 residues long: Large ribosomal subunit protein uL29 (64 aa).

The protein belongs to the universal ribosomal protein uL29 family.

The chain is Large ribosomal subunit protein uL29 from Ligilactobacillus salivarius (strain UCC118) (Lactobacillus salivarius).